The primary structure comprises 537 residues: MNTKYIFVTGGVVSSLGKGITAASLGRLLKNRGLKVSIQKFDPYINIDPGTMSPYQHGEVFVTDDGAETDLDLGHYERFIDESLSRNNNITTGKIYWSVISKERKGDYLGSTVQVIPHITNEIKSRVYKVAEGKNIDVVITEIGGTVGDIESLPFLEAIRQIKYDVGVENVCFIHVTLVPYLKKSGELKTKPTQHSVKELRSIGIQPDIIVCRSEKLISNDLKEKIGLFCNVERDSVIQNLDAENLYEVPLMLHREGLDNLVCKKLKLQCNETDNTEWIIMVDKIKKLSKNVNIALVGKYVELHDAYISVVEALSHGGYANDANVNIKWLNSEDITKDNIEEYLKDIDGILIPGGFGDRGIEGKILAAGWARKNKIPFFGICLGMQCALIEFARSVLKYEGAHSSEINPETKYPVIDLMPDQKDIDEKGGTMRLGKYPCKLLKNSISFKAYGEDVIYERHRHRYEFNNIYRDELIESGLVLSGTSPDSKLVEIIEIKEHPWFIGVQFHPELKSRPNRPHPLFRDFIKASLNSKHKFD.

Positions 1-268 are amidoligase domain; the sequence is MNTKYIFVTG…DNLVCKKLKL (268 aa). Residue serine 14 participates in CTP binding. A UTP-binding site is contributed by serine 14. Residue 15 to 20 coordinates ATP; it reads SLGKGI. L-glutamine is bound at residue tyrosine 55. Residue aspartate 72 coordinates ATP. Residues aspartate 72 and glutamate 142 each coordinate Mg(2+). Residues 149 to 151, 189 to 194, and lysine 225 each bind CTP; these read DIE and KTKPTQ. UTP-binding positions include 189 to 194 and lysine 225; that span reads KTKPTQ. Residues 293–535 enclose the Glutamine amidotransferase type-1 domain; sequence NIALVGKYVE…IKASLNSKHK (243 aa). Residue glycine 355 coordinates L-glutamine. The active-site Nucleophile; for glutamine hydrolysis is cysteine 382. Residues 383–386, glutamate 406, and arginine 463 contribute to the L-glutamine site; that span reads LGMQ. Residues histidine 508 and glutamate 510 contribute to the active site.

This sequence belongs to the CTP synthase family. In terms of assembly, homotetramer.

It catalyses the reaction UTP + L-glutamine + ATP + H2O = CTP + L-glutamate + ADP + phosphate + 2 H(+). It carries out the reaction L-glutamine + H2O = L-glutamate + NH4(+). The catalysed reaction is UTP + NH4(+) + ATP = CTP + ADP + phosphate + 2 H(+). It participates in pyrimidine metabolism; CTP biosynthesis via de novo pathway; CTP from UDP: step 2/2. Allosterically activated by GTP, when glutamine is the substrate; GTP has no effect on the reaction when ammonia is the substrate. The allosteric effector GTP functions by stabilizing the protein conformation that binds the tetrahedral intermediate(s) formed during glutamine hydrolysis. Inhibited by the product CTP, via allosteric rather than competitive inhibition. Catalyzes the ATP-dependent amination of UTP to CTP with either L-glutamine or ammonia as the source of nitrogen. Regulates intracellular CTP levels through interactions with the four ribonucleotide triphosphates. The sequence is that of CTP synthase from Clostridium kluyveri (strain ATCC 8527 / DSM 555 / NBRC 12016 / NCIMB 10680 / K1).